We begin with the raw amino-acid sequence, 297 residues long: Cell division protein FtsQ (297 aa).

Residues 1 to 33 (MRPLSFRRRTAQARPDPAPSRLSYRVQRLLLTP) are Cytoplasmic-facing. Residues 34 to 54 (LFHALIRVGLPAFVLAFGVGW) traverse the membrane as a helical segment. Over 55–297 (LLQNQELRDE…IRGLTNDRIE (243 aa)) the chain is Periplasmic. Residues 82–150 (FMVNAMSVSG…GILAIEIVER (69 aa)) enclose the POTRA domain.

It belongs to the FtsQ/DivIB family. FtsQ subfamily.

Its subcellular location is the cell inner membrane. Its function is as follows. Essential cell division protein. The sequence is that of Cell division protein FtsQ from Dinoroseobacter shibae (strain DSM 16493 / NCIMB 14021 / DFL 12).